The chain runs to 175 residues: ATP synthase subunit delta (175 aa).

This sequence belongs to the ATPase delta chain family. In terms of assembly, F-type ATPases have 2 components, F(1) - the catalytic core - and F(0) - the membrane proton channel. F(1) has five subunits: alpha(3), beta(3), gamma(1), delta(1), epsilon(1). F(0) has three main subunits: a(1), b(2) and c(10-14). The alpha and beta chains form an alternating ring which encloses part of the gamma chain. F(1) is attached to F(0) by a central stalk formed by the gamma and epsilon chains, while a peripheral stalk is formed by the delta and b chains.

It localises to the cell membrane. Functionally, f(1)F(0) ATP synthase produces ATP from ADP in the presence of a proton or sodium gradient. F-type ATPases consist of two structural domains, F(1) containing the extramembraneous catalytic core and F(0) containing the membrane proton channel, linked together by a central stalk and a peripheral stalk. During catalysis, ATP synthesis in the catalytic domain of F(1) is coupled via a rotary mechanism of the central stalk subunits to proton translocation. This protein is part of the stalk that links CF(0) to CF(1). It either transmits conformational changes from CF(0) to CF(1) or is implicated in proton conduction. This Stenotrophomonas maltophilia (strain K279a) protein is ATP synthase subunit delta.